Reading from the N-terminus, the 494-residue chain is WD repeat-containing protein 37 (494 aa).

The segment at 1-38 (MPTESGSWAAARQTKQKRKSHSLSIKRTNSSEQDRPGL) is disordered. Residues 22 to 31 (SLSIKRTNSS) show a composition bias toward polar residues. WD repeat units lie at residues 154 to 194 (GHRD…CLIK) and 197 to 236 (GHAG…PTPQ). The disordered stretch occupies residues 236 to 266 (QPTADTSISGEEEVDFSDKDENDGDGDASSD). Residues 245–263 (GEEEVDFSDKDENDGDGDA) are compositionally biased toward acidic residues. WD repeat units lie at residues 279 to 318 (SHQG…LVHS), 321 to 360 (GHDQ…IHSV), 365 to 403 (GHTD…SPIA), 406 to 445 (RTDS…LARL), and 452 to 493 (GHRR…LLQE).

The protein localises to the cytoplasm. It localises to the nucleus. The sequence is that of WD repeat-containing protein 37 (wdr37) from Xenopus tropicalis (Western clawed frog).